A 105-amino-acid chain; its full sequence is Large ribosomal subunit protein bL21 (105 aa).

The protein belongs to the bacterial ribosomal protein bL21 family. Part of the 50S ribosomal subunit. Contacts protein L20.

Its function is as follows. This protein binds to 23S rRNA in the presence of protein L20. In Bacteroides fragilis (strain YCH46), this protein is Large ribosomal subunit protein bL21.